A 466-amino-acid chain; its full sequence is Rho GTPase-activating protein 1 (466 aa).

2 disordered regions span residues 1-31 and 65-84; these read MTEV…SLSY and EEQD…DDGG. The segment covering 8–31 has biased composition (low complexity); the sequence is PSSPSASHSSSSSSSSPSPSSLSY. The span at 65–74 shows a compositional bias: basic and acidic residues; that stretch reads EEQDLRRRSS. Residues 117–130 form the CRIB domain; it reads IGWPTNVRHVAHVT. The Rho-GAP domain maps to 162 to 342; the sequence is VSTESMQLSY…TLIEKTLRER (181 aa). The tract at residues 354–402 is disordered; it reads PLEPSDESGHQSPSQSLAFNTSEQSEETQSDNIENAENQSSSSEISDEL. Composition is skewed to polar residues over residues 363–376 and 383–397; these read HQSP…NTSE and SDNI…SSSE.

Functionally, acts as a GTPase activator for the Rac-type GTPase by converting it to an inactive GDP-bound state. The sequence is that of Rho GTPase-activating protein 1 (ROPGAP1) from Arabidopsis thaliana (Mouse-ear cress).